The sequence spans 127 residues: Oleate-induced peroxisomal protein POX18 (127 aa).

One can recognise an SCP2 domain in the interval 14-119 (FKELHEGLAD…KATAIESVFK (106 aa)). A hydrophobic region spans residues 33–41 (AVNAVIVIT). Residues 43–52 (KNKEGKEQSW) form a hydrophilic region.

Monomer.

Its subcellular location is the peroxisome. The protein operates within lipid metabolism; fatty acid metabolism. In terms of biological role, is involved in beta-oxidation of long-chain fatty acids. Its exact function is unknown, but possesses a nonspecific lipid-transfer activity, despite the absence of a cysteine residue thought to be essential for the activity of its mammalian counterparts. In Candida maltosa (Yeast), this protein is Oleate-induced peroxisomal protein POX18 (POX18).